The chain runs to 156 residues: Small ribosomal subunit protein uS7 (156 aa).

It belongs to the universal ribosomal protein uS7 family. Part of the 30S ribosomal subunit. Contacts proteins S9 and S11.

In terms of biological role, one of the primary rRNA binding proteins, it binds directly to 16S rRNA where it nucleates assembly of the head domain of the 30S subunit. Is located at the subunit interface close to the decoding center, probably blocks exit of the E-site tRNA. The chain is Small ribosomal subunit protein uS7 from Proteus mirabilis (strain HI4320).